The primary structure comprises 549 residues: Arginine--tRNA ligase (549 aa).

The 'HIGH' region motif lies at 132-142 (ANPTGPLHIGH).

This sequence belongs to the class-I aminoacyl-tRNA synthetase family. In terms of assembly, monomer.

The protein resides in the cytoplasm. The catalysed reaction is tRNA(Arg) + L-arginine + ATP = L-arginyl-tRNA(Arg) + AMP + diphosphate. The chain is Arginine--tRNA ligase from Paenarthrobacter aurescens (strain TC1).